The sequence spans 492 residues: Probable serine/threonine-protein kinase WNK9 (492 aa).

The Protein kinase domain occupies 25–282 (GRYNEVLGKG…ACELLDDHFL (258 aa)). ATP contacts are provided by residues 105–108 (TEMF) and lysine 155. Residue aspartate 172 is the Proton acceptor of the active site.

The protein belongs to the protein kinase superfamily. Ser/Thr protein kinase family. WNK subfamily.

The catalysed reaction is L-seryl-[protein] + ATP = O-phospho-L-seryl-[protein] + ADP + H(+). It catalyses the reaction L-threonyl-[protein] + ATP = O-phospho-L-threonyl-[protein] + ADP + H(+). May regulate flowering time by modulating the photoperiod pathway. The sequence is that of Probable serine/threonine-protein kinase WNK9 (WNK9) from Arabidopsis thaliana (Mouse-ear cress).